Reading from the N-terminus, the 196-residue chain is Interleukin-18 (196 aa).

Residues 1–29 (MSCEEIAVCAVRLRENLCLYFEELECDAF) constitute a propeptide that is removed on maturation.

The protein belongs to the IL-1 family. As to quaternary structure, forms a ternary complex with ligand-binding receptor subunit IL18R1 and signaling receptor subunit IL18RAP at the plasma membrane. Mature IL18 first binds to IL18R1 forming a low affinity binary complex, which then interacts with IL18RAP to form a high affinity ternary complex that signals inside the cell. Interacts with cargo receptor TMED10; the interaction mediates the translocation from the cytoplasm into the ERGIC (endoplasmic reticulum-Golgi intermediate compartment) and thereby secretion. The pro-IL-18 precursor is processed by CASP1 or CASP4 to yield the active form.

The protein resides in the cytoplasm. It localises to the secreted. Functionally, augments natural killer cell activity in spleen cells and stimulates interferon gamma production in T-helper type I cells. Involved in transduction of inflammation downstream of pyroptosis: its mature form is specifically released in the extracellular milieu by passing through the gasdermin-D (GSDMD) pore. This Gallus gallus (Chicken) protein is Interleukin-18 (IL18).